Reading from the N-terminus, the 217-residue chain is Response regulator RR06 (217 aa).

The 114-residue stretch at 2-115 (NILVADDEEM…LLVKRIKALI (114 aa)) folds into the Response regulatory domain. Asp-51 is subject to 4-aspartylphosphate. A DNA-binding region (ompR/PhoB-type) is located at residues 122–217 (EDIWRYQDVT…VKNVGYKISL (96 aa)).

Post-translationally, phosphorylated at threonine residues by StkP; threonine phosphorylation enhances RR06 binding to DNA and may also increase expression of CbpA. May be de-phosphorylated by PhpP.

Member of the two-component regulatory system HK06/RR06 involved in regulation of target genes, including choline-binding protein CbpA. Binds to the promoter region of CbpA and directly activates transcription. The sequence is that of Response regulator RR06 from Streptococcus pneumoniae serotype 2 (strain D39 / NCTC 7466).